The primary structure comprises 729 residues: Phosphoribosylformylglycinamidine synthase subunit PurL (729 aa).

His-42 is an active-site residue. ATP contacts are provided by Tyr-45 and Lys-84. Glu-86 contributes to the Mg(2+) binding site. Substrate contacts are provided by residues 87–90 and Arg-109; that span reads SHNH. His-88 (proton acceptor) is an active-site residue. Position 110 (Asp-110) interacts with Mg(2+). Gln-238 contributes to the substrate binding site. Residue Asp-266 participates in Mg(2+) binding. 310–312 is a binding site for substrate; that stretch reads ESQ. Asp-492 and Gly-529 together coordinate ATP. Asn-530 contacts Mg(2+). Ser-532 contributes to the substrate binding site.

This sequence belongs to the FGAMS family. In terms of assembly, monomer. Part of the FGAM synthase complex composed of 1 PurL, 1 PurQ and 2 PurS subunits.

Its subcellular location is the cytoplasm. The catalysed reaction is N(2)-formyl-N(1)-(5-phospho-beta-D-ribosyl)glycinamide + L-glutamine + ATP + H2O = 2-formamido-N(1)-(5-O-phospho-beta-D-ribosyl)acetamidine + L-glutamate + ADP + phosphate + H(+). It participates in purine metabolism; IMP biosynthesis via de novo pathway; 5-amino-1-(5-phospho-D-ribosyl)imidazole from N(2)-formyl-N(1)-(5-phospho-D-ribosyl)glycinamide: step 1/2. Part of the phosphoribosylformylglycinamidine synthase complex involved in the purines biosynthetic pathway. Catalyzes the ATP-dependent conversion of formylglycinamide ribonucleotide (FGAR) and glutamine to yield formylglycinamidine ribonucleotide (FGAM) and glutamate. The FGAM synthase complex is composed of three subunits. PurQ produces an ammonia molecule by converting glutamine to glutamate. PurL transfers the ammonia molecule to FGAR to form FGAM in an ATP-dependent manner. PurS interacts with PurQ and PurL and is thought to assist in the transfer of the ammonia molecule from PurQ to PurL. The sequence is that of Phosphoribosylformylglycinamidine synthase subunit PurL from Campylobacter concisus (strain 13826).